The sequence spans 197 residues: Imidazoleglycerol-phosphate dehydratase (197 aa).

This sequence belongs to the imidazoleglycerol-phosphate dehydratase family.

Its subcellular location is the cytoplasm. It catalyses the reaction D-erythro-1-(imidazol-4-yl)glycerol 3-phosphate = 3-(imidazol-4-yl)-2-oxopropyl phosphate + H2O. It functions in the pathway amino-acid biosynthesis; L-histidine biosynthesis; L-histidine from 5-phospho-alpha-D-ribose 1-diphosphate: step 6/9. The sequence is that of Imidazoleglycerol-phosphate dehydratase from Streptomyces avermitilis (strain ATCC 31267 / DSM 46492 / JCM 5070 / NBRC 14893 / NCIMB 12804 / NRRL 8165 / MA-4680).